The chain runs to 341 residues: UDP-3-O-(3-hydroxymyristoyl)glucosamine N-acyltransferase (341 aa).

His-239 serves as the catalytic Proton acceptor.

Belongs to the transferase hexapeptide repeat family. LpxD subfamily. In terms of assembly, homotrimer.

The catalysed reaction is a UDP-3-O-[(3R)-3-hydroxyacyl]-alpha-D-glucosamine + a (3R)-hydroxyacyl-[ACP] = a UDP-2-N,3-O-bis[(3R)-3-hydroxyacyl]-alpha-D-glucosamine + holo-[ACP] + H(+). It catalyses the reaction UDP-3-O-[(3R)-3-hydroxytetradecanoyl]-alpha-D-glucosamine + (3R)-hydroxytetradecanoyl-[ACP] = UDP-2-N,3-O-bis[(3R)-3-hydroxytetradecanoyl]-alpha-D-glucosamine + holo-[ACP] + H(+). It functions in the pathway glycolipid biosynthesis; lipid IV(A) biosynthesis; lipid IV(A) from (3R)-3-hydroxytetradecanoyl-[acyl-carrier-protein] and UDP-N-acetyl-alpha-D-glucosamine: step 3/6. In terms of biological role, catalyzes the N-acylation of UDP-3-O-(hydroxytetradecanoyl)glucosamine using 3-hydroxytetradecanoyl-ACP as the acyl donor. Is involved in the biosynthesis of lipid A, a phosphorylated glycolipid that anchors the lipopolysaccharide to the outer membrane of the cell. In Escherichia coli (strain UTI89 / UPEC), this protein is UDP-3-O-(3-hydroxymyristoyl)glucosamine N-acyltransferase.